A 93-amino-acid chain; its full sequence is Hematopoietic cell signal transducer (93 aa).

The signal sequence occupies residues 1–18; it reads MIHLGHILFLLLLPVAAA. Residues 19 to 48 lie on the Extracellular side of the membrane; it reads QTTPGERSSLPAFYPGTSGSCSGCGSLSLP. A helical transmembrane segment spans residues 49–69; that stretch reads LLAGLVAADAVASLLIVGAVF. Residues 70-93 are Cytoplasmic-facing; that stretch reads LCARPRRSPAQEDGKVYINMPGRG. Tyr-86 bears the Phosphotyrosine mark. A GRB2 binding site region spans residues 86–88; sequence YIN. Residues 86–89 are PIK3R1 binding site; sequence YINM.

It belongs to the DAP10 family. Interacts with CLEC5A. Forms an CLEC5A/TYROBP/HCST trimolecular complex depending almost solely on TYROBP. Homodimer; Disulfide-linked. Heterohexamer composed of four subunits of HCST/DAP10 and two subunits of KLRK1. Interacts (via transmembrane domain) with KLRK1 (via transmembrane domain); the interaction is required for KLRK1 NK cell surface and induces NK cell-mediated cytotoxicity. Interacts with PIK3R1 and GRB2. Interacts with CD300H. Post-translationally, phosphorylated; PIK3R1 and GRB2 associate specifically with tyrosine-phosphorylated HCST. O-glycosylated. In terms of tissue distribution, predominantly expressed in hemopoietic cells such as NK cells, subset of T-cells and monocytes. Detected in leukocytes, spleen, and thymus.

Its subcellular location is the membrane. Transmembrane adapter protein which associates with KLRK1 to form an activation receptor KLRK1-HCST in lymphoid and myeloid cells; this receptor plays a major role in triggering cytotoxicity against target cells expressing cell surface ligands such as MHC class I chain-related MICA and MICB, and UL16-binding proteins (ULBPs); these ligands are up-regulated by stress conditions and pathological state such as viral infection and tumor transformation. Functions as a docking site for PI3-kinase PIK3R1 and GRB2. Interaction of ULBPs with KLRK1-HCST triggers calcium mobilization and activation of the PIK3R1, MAP2K/ERK, and JAK2/STAT5 signaling pathways. Both PIK3R1 and GRB2 are required for full KLRK1-HCST-mediated activation and ultimate killing of target cells. In NK cells, KLRK1-HCST signaling directly induces cytotoxicity and enhances cytokine production initiated via DAP12/TYROBP-associated receptors. In T-cells, it provides primarily costimulation for TCR-induced signals. KLRK1-HCST receptor plays a role in immune surveillance against tumors and is required for cytolysis of tumors cells; indeed, melanoma cells that do not express KLRK1 ligands escape from immune surveillance mediated by NK cells. This Homo sapiens (Human) protein is Hematopoietic cell signal transducer (HCST).